We begin with the raw amino-acid sequence, 860 residues long: Endo-1,4-beta-xylanase B (860 aa).

Residues 1–20 form the signal peptide; that stretch reads MKFSSANKILFSGLVASANA. The region spanning 21-324 is the GH10 domain; the sequence is YDLLKDYAGD…KPVYNTLLNI (304 aa). Residue Glu144 is the Proton donor of the active site. Glu255 serves as the catalytic Nucleophile. Cys278 and Cys284 are oxidised to a cystine. N-linked (GlcNAc...) asparagine glycans are attached at residues Asn295, Asn309, Asn359, and Asn374. 2 stretches are compositionally biased toward polar residues: residues 330–362 and 371–418; these read RPAS…NKSK and LPGN…NSKT. Residues 330–793 are disordered; the sequence is RPASSSAKTL…TKTLPGGACK (464 aa). Repeat 1 spans residues 375-382; it reads KSKTLPGG. A 47 X 8 AA tandem repeats of [SKN]-S-K-T-L-P-G-G region spans residues 375–782; sequence KSKTLPGGNS…GGKSKTLPGG (408 aa). An N-linked (GlcNAc...) asparagine glycan is attached at Asn390. The stretch at 391–398 is repeat 2; that stretch reads KSKTLPGG. N-linked (GlcNAc...) asparagine glycosylation occurs at Asn406. 45 repeat units span residues 415–422, 431–438, 439–446, 447–454, 455–462, 463–470, 471–478, 479–486, 487–494, 495–502, 503–510, 511–518, 519–526, 527–534, 535–542, 543–550, 551–558, 559–566, 567–574, 575–582, 583–590, 591–598, 599–606, 607–614, 615–622, 623–630, 631–638, 639–646, 647–654, 655–662, 663–670, 671–678, 679–686, 687–694, 695–702, 703–710, 711–718, 719–726, 727–734, 735–742, 743–750, 751–758, 759–766, 767–774, and 775–782. 2 stretches are compositionally biased toward polar residues: residues 461–474 and 485–498; these read GGNS…SSKT. 4 stretches are compositionally biased toward polar residues: residues 525–546, 557–570, 581–594, and 605–618; these read GGNS…SSKT and GGNS…NSKT. Residues 645 to 666 show a composition bias toward polar residues; the sequence is GGNSKTLPGGNSKTLPGGSSKT. Positions 741–754 are enriched in polar residues; it reads GGNSKTLPGGSSKT. The region spanning 824 to 860 is the CBM1 domain; the sequence is NCAAKWGQCGGNGFNGPTCCQNGSRCQFVNEWYSQCL. The N-linked (GlcNAc...) asparagine glycan is linked to Asn845.

The protein belongs to the glycosyl hydrolase 10 (cellulase F) family.

The protein localises to the secreted. The enzyme catalyses Endohydrolysis of (1-&gt;4)-beta-D-xylosidic linkages in xylans.. It functions in the pathway glycan degradation; xylan degradation. Its function is as follows. Endo-1,4-beta-xylanase involved in the hydrolysis of xylan, a major structural heterogeneous polysaccharide found in plant biomass representing the second most abundant polysaccharide in the biosphere, after cellulose. Hydrolyzes both unsubstituted (oat spelts) and highly substituted (rye and wheat) forms of arabinoxylanslans. This Neocallimastix patriciarum (Rumen fungus) protein is Endo-1,4-beta-xylanase B (xynB).